Reading from the N-terminus, the 401-residue chain is 1-deoxy-D-xylulose 5-phosphate reductoisomerase (401 aa).

NADPH contacts are provided by threonine 11, glycine 12, serine 13, isoleucine 14, arginine 38, asparagine 39, and asparagine 125. Lysine 126 contributes to the 1-deoxy-D-xylulose 5-phosphate binding site. Glutamate 127 contributes to the NADPH binding site. Position 151 (aspartate 151) interacts with Mn(2+). The 1-deoxy-D-xylulose 5-phosphate site is built by serine 152, glutamate 153, serine 179, and histidine 202. Mn(2+) is bound at residue glutamate 153. Glycine 208 contributes to the NADPH binding site. Residues serine 215, asparagine 220, lysine 221, and glutamate 224 each coordinate 1-deoxy-D-xylulose 5-phosphate. Position 224 (glutamate 224) interacts with Mn(2+).

It belongs to the DXR family. Mg(2+) is required as a cofactor. Requires Mn(2+) as cofactor.

The enzyme catalyses 2-C-methyl-D-erythritol 4-phosphate + NADP(+) = 1-deoxy-D-xylulose 5-phosphate + NADPH + H(+). It functions in the pathway isoprenoid biosynthesis; isopentenyl diphosphate biosynthesis via DXP pathway; isopentenyl diphosphate from 1-deoxy-D-xylulose 5-phosphate: step 1/6. In terms of biological role, catalyzes the NADPH-dependent rearrangement and reduction of 1-deoxy-D-xylulose-5-phosphate (DXP) to 2-C-methyl-D-erythritol 4-phosphate (MEP). This chain is 1-deoxy-D-xylulose 5-phosphate reductoisomerase, found in Paraburkholderia phytofirmans (strain DSM 17436 / LMG 22146 / PsJN) (Burkholderia phytofirmans).